The sequence spans 293 residues: tRNA (guanine-N(7)-)-methyltransferase (293 aa).

Over residues methionine 1–arginine 31 the composition is skewed to basic and acidic residues. Disordered stretches follow at residues methionine 1–lysine 33 and isoleucine 68–arginine 97. Residues threonine 75–glutamate 85 show a composition bias toward pro residues. Residues glycine 111, glutamate 134–isoleucine 135, asparagine 169–threonine 170, and cysteine 189 contribute to the S-adenosyl-L-methionine site. Aspartate 192 is an active-site residue. Threonine 267–glutamate 269 contributes to the S-adenosyl-L-methionine binding site.

This sequence belongs to the class I-like SAM-binding methyltransferase superfamily. TrmB family. As to quaternary structure, forms a complex with TRM82.

The protein resides in the nucleus. The enzyme catalyses guanosine(46) in tRNA + S-adenosyl-L-methionine = N(7)-methylguanosine(46) in tRNA + S-adenosyl-L-homocysteine. It functions in the pathway tRNA modification; N(7)-methylguanine-tRNA biosynthesis. In terms of biological role, catalyzes the formation of N(7)-methylguanine at position 46 (m7G46) in tRNA. The chain is tRNA (guanine-N(7)-)-methyltransferase from Chaetomium globosum (strain ATCC 6205 / CBS 148.51 / DSM 1962 / NBRC 6347 / NRRL 1970) (Soil fungus).